We begin with the raw amino-acid sequence, 367 residues long: Dual-specificity RNA methyltransferase RlmN (367 aa).

The Proton acceptor role is filled by Glu91. Residues Gly102–Asp337 enclose the Radical SAM core domain. Cys109 and Cys342 are disulfide-bonded. The [4Fe-4S] cluster site is built by Cys116, Cys120, and Cys123. S-adenosyl-L-methionine contacts are provided by residues Gly169–Glu170, Ser201, Ser223–His225, and Asn299. Residue Cys342 is the S-methylcysteine intermediate of the active site.

The protein belongs to the radical SAM superfamily. RlmN family. Requires [4Fe-4S] cluster as cofactor.

Its subcellular location is the cytoplasm. It catalyses the reaction adenosine(2503) in 23S rRNA + 2 reduced [2Fe-2S]-[ferredoxin] + 2 S-adenosyl-L-methionine = 2-methyladenosine(2503) in 23S rRNA + 5'-deoxyadenosine + L-methionine + 2 oxidized [2Fe-2S]-[ferredoxin] + S-adenosyl-L-homocysteine. It carries out the reaction adenosine(37) in tRNA + 2 reduced [2Fe-2S]-[ferredoxin] + 2 S-adenosyl-L-methionine = 2-methyladenosine(37) in tRNA + 5'-deoxyadenosine + L-methionine + 2 oxidized [2Fe-2S]-[ferredoxin] + S-adenosyl-L-homocysteine. Specifically methylates position 2 of adenine 2503 in 23S rRNA and position 2 of adenine 37 in tRNAs. m2A2503 modification seems to play a crucial role in the proofreading step occurring at the peptidyl transferase center and thus would serve to optimize ribosomal fidelity. This Nitratidesulfovibrio vulgaris (strain DSM 19637 / Miyazaki F) (Desulfovibrio vulgaris) protein is Dual-specificity RNA methyltransferase RlmN.